The sequence spans 1164 residues: IgA FC receptor (1164 aa).

The signal sequence occupies residues 1–37; it reads MFKSNYERKMRYSIRKFSVGVASVAVASLFMGSVAHA. Disordered regions lie at residues 54 to 75 and 167 to 220; these read KPYP…ELET and HEEV…EDKD. Residues 59 to 73 show a composition bias toward polar residues; it reads MAQTDQGNNSSSSEL. Composition is skewed to basic and acidic residues over residues 167–176 and 183–220; these read HEEVEKDKKA and KQSD…EDKD. IgA-binding stretches follow at residues 199–438 and 439–826; these read NHQK…KIEL and TVSP…ETNT. Positions 434–534 constitute an Ig-like domain; that stretch reads QKIELTVSPE…VEKTFTITVQ (101 aa). Positions 536–564 are enriched in basic and acidic residues; the sequence is KEEKQVPKTPEQKDSKTEEKVPQEPKSND. Disordered stretches follow at residues 536-567 and 823-947; these read KEEK…DKNQ and ETNT…PDGL. Over residues 911–920 the composition is skewed to pro residues; it reads PKIPEPPKTP. The LPXTG sorting signal signature appears at 1132 to 1136; it reads LPYTG. Residue Thr-1135 is modified to Pentaglycyl murein peptidoglycan amidated threonine. Positions 1136–1164 are cleaved as a propeptide — removed by sortase; that stretch reads GVASNLVLEIMGLLGLIGTSFIAMKRRKS.

It localises to the secreted. The protein localises to the cell wall. The chain is IgA FC receptor (bag) from Streptococcus agalactiae.